The sequence spans 490 residues: Probable cytosol aminopeptidase (490 aa).

2 residues coordinate Mn(2+): Lys260 and Asp265. Residue Lys272 is part of the active site. Mn(2+) contacts are provided by Asp284, Asp343, and Glu345. Arg347 is a catalytic residue.

Belongs to the peptidase M17 family. The cofactor is Mn(2+).

It localises to the cytoplasm. The catalysed reaction is Release of an N-terminal amino acid, Xaa-|-Yaa-, in which Xaa is preferably Leu, but may be other amino acids including Pro although not Arg or Lys, and Yaa may be Pro. Amino acid amides and methyl esters are also readily hydrolyzed, but rates on arylamides are exceedingly low.. The enzyme catalyses Release of an N-terminal amino acid, preferentially leucine, but not glutamic or aspartic acids.. Functionally, presumably involved in the processing and regular turnover of intracellular proteins. Catalyzes the removal of unsubstituted N-terminal amino acids from various peptides. The protein is Probable cytosol aminopeptidase of Gloeothece citriformis (strain PCC 7424) (Cyanothece sp. (strain PCC 7424)).